Consider the following 37-residue polypeptide: Large ribosomal subunit protein bL36 (37 aa).

The protein belongs to the bacterial ribosomal protein bL36 family.

This chain is Large ribosomal subunit protein bL36, found in Borreliella burgdorferi (strain ATCC 35210 / DSM 4680 / CIP 102532 / B31) (Borrelia burgdorferi).